Consider the following 584-residue polypeptide: Beta-fructofuranosidase, insoluble isoenzyme CWINV1 (584 aa).

Positions 1–28 are cleaved as a signal peptide; it reads MTKEVCSNIGLWLLLTLLIGNYVVNLEA. Substrate is bound by residues 63–66, Gln-82, Trp-90, and 125–126; these read WMND and WS. Asp-66 is a catalytic residue. N-linked (GlcNAc...) asparagine glycosylation is found at Asn-159 and Asn-186. Residues 191-192, Glu-246, and Asp-282 each bind substrate; that span reads RD. N-linked (GlcNAc...) asparagine glycosylation is found at Asn-342 and Asn-446. Cys-442 and Cys-491 are joined by a disulfide.

Belongs to the glycosyl hydrolase 32 family. In terms of tissue distribution, expressed in seedlings, leaves, flowers, and seeds.

The protein localises to the secreted. It localises to the extracellular space. The protein resides in the apoplast. Its subcellular location is the cell wall. The enzyme catalyses Hydrolysis of terminal non-reducing beta-D-fructofuranoside residues in beta-D-fructofuranosides.. Its function is as follows. Beta-fructofuranosidase that can use sucrose and 1-kestose, and, to a lower extent, neokestose and levan, as substrates, but not inuline. The protein is Beta-fructofuranosidase, insoluble isoenzyme CWINV1 (CWINV1) of Arabidopsis thaliana (Mouse-ear cress).